Here is a 234-residue protein sequence, read N- to C-terminus: Zein-alpha A30 (234 aa).

The signal sequence occupies residues 1–21; sequence MAAKIFCLLMLLGLSASAATA.

Belongs to the zein family.

Functionally, zeins are major seed storage proteins. The chain is Zein-alpha A30 from Zea mays (Maize).